The sequence spans 237 residues: Phosphoribosylaminoimidazole-succinocarboxamide synthase (237 aa).

It belongs to the SAICAR synthetase family.

The catalysed reaction is 5-amino-1-(5-phospho-D-ribosyl)imidazole-4-carboxylate + L-aspartate + ATP = (2S)-2-[5-amino-1-(5-phospho-beta-D-ribosyl)imidazole-4-carboxamido]succinate + ADP + phosphate + 2 H(+). The protein operates within purine metabolism; IMP biosynthesis via de novo pathway; 5-amino-1-(5-phospho-D-ribosyl)imidazole-4-carboxamide from 5-amino-1-(5-phospho-D-ribosyl)imidazole-4-carboxylate: step 1/2. The sequence is that of Phosphoribosylaminoimidazole-succinocarboxamide synthase from Baumannia cicadellinicola subsp. Homalodisca coagulata.